We begin with the raw amino-acid sequence, 245 residues long: MIIPALDLIDGTVVRLHQGDYGKQRDYGNDPLPRLQDYAAQGAEVLHLVDLTGAKDPAKRQIPLIKTLVAGVNVPVQVGGGVRSEEDVAALLEAGVARVVVGSTAVKSPEMVKGWFERFGADALVLALDVRIDEQGNKQVAVSGWQENSGVSLEQLVETYLPVGLKHVLCTDISRDGTLAGSNVSLYEEVCARYPQVAFQSSGGIGDIDDVAALRGTGVRGVIVGRALLEGKFTVKEAIACWQNA.

Aspartate 7 acts as the Proton acceptor in catalysis. The active-site Proton donor is aspartate 129.

Belongs to the HisA/HisF family.

It is found in the cytoplasm. It carries out the reaction 1-(5-phospho-beta-D-ribosyl)-5-[(5-phospho-beta-D-ribosylamino)methylideneamino]imidazole-4-carboxamide = 5-[(5-phospho-1-deoxy-D-ribulos-1-ylimino)methylamino]-1-(5-phospho-beta-D-ribosyl)imidazole-4-carboxamide. Its pathway is amino-acid biosynthesis; L-histidine biosynthesis; L-histidine from 5-phospho-alpha-D-ribose 1-diphosphate: step 4/9. The sequence is that of 1-(5-phosphoribosyl)-5-[(5-phosphoribosylamino)methylideneamino] imidazole-4-carboxamide isomerase from Escherichia coli O9:H4 (strain HS).